The sequence spans 43 residues: uncharacterized protein (43 aa).

The interval 1 to 43 (MFKSRIETGGFQFQVHGDDESAMDDEFIDDDDDQQVVEPVTDN) is disordered. Residues 20 to 35 (ESAMDDEFIDDDDDQQ) show a composition bias toward acidic residues.

This is an uncharacterized protein from Dictyostelium discoideum (Social amoeba).